Here is a 393-residue protein sequence, read N- to C-terminus: Zinc finger CCCH domain-containing protein 2 (393 aa).

Residues 1–71 (MDVVCTEHQM…NRENKEYCYD (71 aa)) form a disordered region. The segment covering 20–37 (RKLLLSSKSFPSDSSSPR) has biased composition (low complexity). The span at 60–69 (DNNRENKEYC) shows a compositional bias: basic and acidic residues. C3H1-type zinc fingers lie at residues 122-150 (QYSG…HGVF) and 159-181 (YRTE…AHSP).

Interacts with MARD1/FLZ9 and RD21A. In terms of tissue distribution, specifically expressed in seeds.

The protein resides in the nucleus. Probable transcription repressor that functions as a negative regulator of phytochrome-mediated promotion of seed germination. Inhibits seed germination by regulating the expression of gibberellic acid (GA) and abscisic acid (ABA) metabolic genes. Does not regulate the expression of the DELLA genes RGA and RGA1. Activated by PIL5, a phytochrome-interacting basic helix-loop-helix transcription factor. Represses directly JMJ20 and JMJ22 expression in the absence of red light (R) and in far-red (FR) conditions. The protein is Zinc finger CCCH domain-containing protein 2 of Arabidopsis thaliana (Mouse-ear cress).